A 513-amino-acid chain; its full sequence is 2-isopropylmalate synthase (513 aa).

Positions 5–268 (LIIFDTTLRD…DVGIDTTQIV (264 aa)) constitute a Pyruvate carboxyltransferase domain. Mn(2+) contacts are provided by Asp-14, His-202, His-204, and Asn-239. The tract at residues 394–513 (RFISLSQRSE…KAVQKINPQI (120 aa)) is regulatory domain.

Belongs to the alpha-IPM synthase/homocitrate synthase family. LeuA type 1 subfamily. In terms of assembly, homodimer. Requires Mn(2+) as cofactor.

The protein resides in the cytoplasm. The catalysed reaction is 3-methyl-2-oxobutanoate + acetyl-CoA + H2O = (2S)-2-isopropylmalate + CoA + H(+). The protein operates within amino-acid biosynthesis; L-leucine biosynthesis; L-leucine from 3-methyl-2-oxobutanoate: step 1/4. Catalyzes the condensation of the acetyl group of acetyl-CoA with 3-methyl-2-oxobutanoate (2-ketoisovalerate) to form 3-carboxy-3-hydroxy-4-methylpentanoate (2-isopropylmalate). The chain is 2-isopropylmalate synthase from Cupriavidus metallidurans (strain ATCC 43123 / DSM 2839 / NBRC 102507 / CH34) (Ralstonia metallidurans).